Consider the following 36-residue polypeptide: Kappa-theraphotoxin-Pg1a (36 aa).

3 disulfides stabilise this stretch: Cys-4–Cys-19, Cys-11–Cys-24, and Cys-18–Cys-31.

It belongs to the neurotoxin 10 (Hwtx-1) family. 44 (Jztx-4) subfamily. Expressed by the venom gland.

Its subcellular location is the secreted. Gating modifier of Kv2.1/KCNB1 (IC(50)=5.1 nM), Kv2.2/KCNB2 and Kv4.3/KCND3 channels (IC(50)=39 nM). Acts by shifting the channel activation to more depolarized potentials by stabilizing the resting conformation of the voltage sensor. It completely inhibits opening of the Kv2.1/KCNB1 channel at negative membrane voltages and dramatically shifts channel activation to positive voltages. May act by partitioning into lipid membranes and then by binding the voltage sensor paddle of the channel from a place within the membrane. This is Kappa-theraphotoxin-Pg1a from Chilobrachys guangxiensis (Chinese earth tiger tarantula).